We begin with the raw amino-acid sequence, 493 residues long: Probable glycine dehydrogenase (decarboxylating) subunit 2 (493 aa).

Lys269 bears the N6-(pyridoxal phosphate)lysine mark.

It belongs to the GcvP family. C-terminal subunit subfamily. As to quaternary structure, the glycine cleavage system is composed of four proteins: P, T, L and H. In this organism, the P 'protein' is a heterodimer of two subunits. Pyridoxal 5'-phosphate serves as cofactor.

It carries out the reaction N(6)-[(R)-lipoyl]-L-lysyl-[glycine-cleavage complex H protein] + glycine + H(+) = N(6)-[(R)-S(8)-aminomethyldihydrolipoyl]-L-lysyl-[glycine-cleavage complex H protein] + CO2. Its function is as follows. The glycine cleavage system catalyzes the degradation of glycine. The P protein binds the alpha-amino group of glycine through its pyridoxal phosphate cofactor; CO(2) is released and the remaining methylamine moiety is then transferred to the lipoamide cofactor of the H protein. In Chloroherpeton thalassium (strain ATCC 35110 / GB-78), this protein is Probable glycine dehydrogenase (decarboxylating) subunit 2.